A 595-amino-acid polypeptide reads, in one-letter code: MAQAWAFLLPLLVLGSYVTSLFFPTYISNPLCGGDGGRSFHLCAQAPKDPDPPAVSTMYKTAFHFQPAKNWMNDPSGPMYFNGIYHEFYQYNLNGPIFGDIVWGHSVSTDLVNWIGLEPALVRDTPSDIDGCWTGSVTILPGGKPIIIYTGGDIDQNQAQNIAFPKNRSDPYLREWIKADNNPVLRPDEPGMNSIEFRDPTTGWIGPDGLWRMAVGGELNGYSAALLYKSEDFLNWTKVDHPLYSHNGSNMWECPDFFAVLPGNNAGLDLSAAIPQGAKHALKMSVDSVDKYMIGVYDLQRDAFVPDNVVDDRRLWLRIDYGTFYASKSFFDSNKNRRIIWGWSRETDSPSDDLAKGWAGLHTIPRTIWLAGDGKQLLQWPVEEIESLRTNEINHQGLELNKGDLFEIKEVDAFQADVEIDFELASIDDADRFDPSWLLDPEKHCGEAGASVPGGIGPFGLVILASDNMDEHTEVYFRVYKSEEKYMVLMCSDLRRSSLRPDLEKPAYGGFFEFDLEKERKISLRTLIDRSAVESFGGGGRVCITSRVYPAVLADVGRAHIYAFNNGSATVSVPQLSAWTMRKAQVNVEKGWSAI.

The signal sequence occupies residues 1–20; sequence MAQAWAFLLPLLVLGSYVTS. The active site involves D74. Residues N167, N235, and N247 are each glycosylated (N-linked (GlcNAc...) asparagine). A disulfide bridge connects residues C445 and C491. Residue N566 is glycosylated (N-linked (GlcNAc...) asparagine).

This sequence belongs to the glycosyl hydrolase 32 family.

The catalysed reaction is Hydrolysis of terminal, non-reducing (2-&gt;1)-linked beta-D-fructofuranose residues in fructans.. Its activity is regulated as follows. Inhibited by sucrose. Functionally, hydrolyzes inulin-type beta-(2,1)-fructans. May play a role as a beta-(2,1)-trimmer during graminan biosynthesis. This Aegilops speltoides (Goatgrass) protein is Fructan 1-exohydrolase.